Here is a 170-residue protein sequence, read N- to C-terminus: Putative apoptosis inhibitor ORF87 (170 aa).

2 BIR repeats span residues 22–92 and 104–169; these read RIKS…PVGK and RLKS…KLSS.

In terms of biological role, may act as an apoptosis inhibitor. The polypeptide is Putative apoptosis inhibitor ORF87 (Ostreid herpesvirus 1 (isolate France) (OsHV-1)).